The chain runs to 76 residues: Translation initiation factor IF-1 (76 aa).

The region spanning 1–72 (MAKKDVVVMQ…NKGRIVKREK (72 aa)) is the S1-like domain.

The protein belongs to the IF-1 family. Component of the 30S ribosomal translation pre-initiation complex which assembles on the 30S ribosome in the order IF-2 and IF-3, IF-1 and N-formylmethionyl-tRNA(fMet); mRNA recruitment can occur at any time during PIC assembly.

It is found in the cytoplasm. Functionally, one of the essential components for the initiation of protein synthesis. Stabilizes the binding of IF-2 and IF-3 on the 30S subunit to which N-formylmethionyl-tRNA(fMet) subsequently binds. Helps modulate mRNA selection, yielding the 30S pre-initiation complex (PIC). Upon addition of the 50S ribosomal subunit IF-1, IF-2 and IF-3 are released leaving the mature 70S translation initiation complex. The sequence is that of Translation initiation factor IF-1 from Petrotoga mobilis (strain DSM 10674 / SJ95).